The following is a 154-amino-acid chain: Transcription antitermination protein NusB (154 aa).

Belongs to the NusB family.

Its function is as follows. Involved in transcription antitermination. Required for transcription of ribosomal RNA (rRNA) genes. Binds specifically to the boxA antiterminator sequence of the ribosomal RNA (rrn) operons. This chain is Transcription antitermination protein NusB, found in Methylobacillus flagellatus (strain ATCC 51484 / DSM 6875 / VKM B-1610 / KT).